We begin with the raw amino-acid sequence, 464 residues long: Argininosuccinate lyase (464 aa).

The protein belongs to the lyase 1 family. Argininosuccinate lyase subfamily.

It is found in the cytoplasm. The enzyme catalyses 2-(N(omega)-L-arginino)succinate = fumarate + L-arginine. The protein operates within amino-acid biosynthesis; L-arginine biosynthesis; L-arginine from L-ornithine and carbamoyl phosphate: step 3/3. Strongly inhibited by L-arginine. Inhibitory effects are lowered at pH 7.0 compared to those at pH 8.0. At 37 degrees Celsius and pH 7.5, activity decreases to 73% and 31% in the presence of 1 mM and 10 mM arginine, respectively. Activity also decreases to 84%, 93%, 82% and 85% in the presence of 10 mM sodium citrate, citrulline, asparatate and glutamate, respectively. Activity decreases to 96% in presence of 1 mM L-lysine. Catalyzes the last step of arginine biosynthesis, the conversion of argininosuccinate into L-arginine and fumarate. The protein is Argininosuccinate lyase of Arthrospira platensis (strain NIES-39 / UTEX 3086 / IAM M-135) (Spirulina platensis).